A 921-amino-acid chain; its full sequence is Isoleucine--tRNA ligase (921 aa).

A 'HIGH' region motif is present at residues 57–67; the sequence is PYANGDIHMGH. Residue glutamate 552 participates in L-isoleucyl-5'-AMP binding. Positions 593–597 match the 'KMSKS' region motif; sequence KMSKS. Lysine 596 is a binding site for ATP. Residues cysteine 888, cysteine 891, cysteine 908, and cysteine 911 each contribute to the Zn(2+) site.

It belongs to the class-I aminoacyl-tRNA synthetase family. IleS type 1 subfamily. As to quaternary structure, monomer. Zn(2+) is required as a cofactor.

The protein resides in the cytoplasm. The enzyme catalyses tRNA(Ile) + L-isoleucine + ATP = L-isoleucyl-tRNA(Ile) + AMP + diphosphate. Catalyzes the attachment of isoleucine to tRNA(Ile). As IleRS can inadvertently accommodate and process structurally similar amino acids such as valine, to avoid such errors it has two additional distinct tRNA(Ile)-dependent editing activities. One activity is designated as 'pretransfer' editing and involves the hydrolysis of activated Val-AMP. The other activity is designated 'posttransfer' editing and involves deacylation of mischarged Val-tRNA(Ile). The protein is Isoleucine--tRNA ligase of Bacillus anthracis (strain A0248).